The chain runs to 259 residues: Short-chain dehydrogenase chry4 (259 aa).

The NADP(+) site is built by R37, D55, N81, Y154, K158, V185, and T187. The Proton donor role is filled by Y154. K158 functions as the Lowers pKa of active site Tyr in the catalytic mechanism.

It belongs to the short-chain dehydrogenases/reductases (SDR) family.

The protein operates within pigment biosynthesis. Short-chain dehydrogenase; part of the gene cluster that mediates the biosynthesis of the yellow pigment chrysogine. Pyruvic acid and anthranilic acid are likely substrates for the nonribosomal peptide synthetase chry1/NRPS14, with pyruvic acid adenylated by the first A domain and anthranilic acid by the second. If pyruvic acid and anthranilic acid are merged and released from chry1/NRPS14 by hydrolysis, a subsequent amidation would lead to 2-pyruvoylaminobenzamide. This process is probably catalyzed by the amidotransferase chry2 using glutamine as amino donor. The dehydrogenase chry5 that has a terminal berberine bridge domain for C-N cyclization could catalyze the cyclization of 2-pyruvoylaminobenzamide to yield acetyl-4(3H)-quinazolidinone. A final reduction of acetyl-4(3H)-quinazolidinone catalyzed by the oxidoreductase chry4 would result in chrysogine. This chain is Short-chain dehydrogenase chry4, found in Gibberella zeae (strain ATCC MYA-4620 / CBS 123657 / FGSC 9075 / NRRL 31084 / PH-1) (Wheat head blight fungus).